The following is a 368-amino-acid chain: High affinity iron permease 1 (368 aa).

7 helical membrane passes run 8–28 (VPIFFILFRETTEAAIIISVL), 50–70 (VWIGGAAGLFICLCIGAAFIA), 86–106 (IWEGVFSLVAVIMITAMGLAM), 142–162 (AFFVLPFITVLREGLEAVVFI), 173–193 (SIPIAAIMGIICGCLVGFLIY), 204–224 (FFVFSTVVLYLVAAGLMAKGV), and 287–307 (SIISYCLYWLFVCCYLVFSYF). Positions 346 to 368 (DKESDEEANNHPKEKIESDAIKA) are disordered. A compositionally biased stretch (basic and acidic residues) spans 353–368 (ANNHPKEKIESDAIKA).

This sequence belongs to the oxidase-dependent Fe transporter (OFeT) (TC 9.A.10.1) family.

The protein localises to the cell membrane. Functionally, high affinity iron permease required for iron uptake in iron-depleted environments. Required for full virulence in mice. This chain is High affinity iron permease 1, found in Rhizopus delemar (strain RA 99-880 / ATCC MYA-4621 / FGSC 9543 / NRRL 43880) (Mucormycosis agent).